Reading from the N-terminus, the 361-residue chain is MSLTKKKVLVGMSGGVDSSVAAYLLKEQGYEVIGATMQIWQEDKEVEEREGGCCSLSAVEDARRVCDKLDIPFYVLNFRDSFKKKVIEPFIQEYIDGRTPNPCIECNKHLKFDELLRKAQGIGVDYIATGHYAKIEKKDDRYMLIRSDDDRKDQTYALYNFTQDQLAHTLMPCGEYTKDRIREIAKEIGLAVHNKKDSEEICFISDNDHGKYILNAKPGAVKSGNFVDKSGNVLGKHKGIVYYTIGQRKGLGLSVGRPVFVTDINPRTNEVVIGAEEDIFKTELIAGDLNFITFDKLEKEIEVEAKIRYSAKPAKATIVPLKDGRVKVVFDEKQRAITKGQSVVFYNGNIVIGGGIIEAII.

Residues 11–18 (GMSGGVDS) and Met37 contribute to the ATP site. Cys106 serves as the catalytic Nucleophile. A disulfide bond links Cys106 and Cys202. Gly130 is an ATP binding site. The tract at residues 152–154 (KDQ) is interaction with tRNA. The active-site Cysteine persulfide intermediate is the Cys202. The interaction with tRNA stretch occupies residues 308–309 (RY).

Belongs to the MnmA/TRMU family.

Its subcellular location is the cytoplasm. It carries out the reaction S-sulfanyl-L-cysteinyl-[protein] + uridine(34) in tRNA + AH2 + ATP = 2-thiouridine(34) in tRNA + L-cysteinyl-[protein] + A + AMP + diphosphate + H(+). Functionally, catalyzes the 2-thiolation of uridine at the wobble position (U34) of tRNA, leading to the formation of s(2)U34. The protein is tRNA-specific 2-thiouridylase MnmA of Clostridium botulinum (strain Alaska E43 / Type E3).